A 92-amino-acid chain; its full sequence is Kappa-scoloptoxin(15)-Ssd2a (92 aa).

The first 20 residues, 1-20 (MKMVYLGLFLIITSCVISSG), serve as a signal peptide directing secretion.

Post-translationally, contains 3 disulfide bonds. As to expression, expressed by the venom gland.

It is found in the secreted. Inhibits voltage-gated potassium channels (Kv) (IC(50)=about 10 nM), when tested on DRG neurons. In Scolopendra dehaani (Thai centipede), this protein is Kappa-scoloptoxin(15)-Ssd2a.